Reading from the N-terminus, the 187-residue chain is Peptidyl-tRNA hydrolase (187 aa).

Y18 provides a ligand contact to tRNA. Catalysis depends on H23, which acts as the Proton acceptor. TRNA is bound by residues F65, N67, and N113.

This sequence belongs to the PTH family. Monomer.

The protein resides in the cytoplasm. It catalyses the reaction an N-acyl-L-alpha-aminoacyl-tRNA + H2O = an N-acyl-L-amino acid + a tRNA + H(+). Its function is as follows. Hydrolyzes ribosome-free peptidyl-tRNAs (with 1 or more amino acids incorporated), which drop off the ribosome during protein synthesis, or as a result of ribosome stalling. In terms of biological role, catalyzes the release of premature peptidyl moieties from peptidyl-tRNA molecules trapped in stalled 50S ribosomal subunits, and thus maintains levels of free tRNAs and 50S ribosomes. The protein is Peptidyl-tRNA hydrolase of Coxiella burnetii (strain CbuK_Q154) (Coxiella burnetii (strain Q154)).